The primary structure comprises 364 residues: Mitogen-activated protein kinase 11 (364 aa).

Positions 24–308 (LQGLRPVGSG…AAEALAHAYF (285 aa)) constitute a Protein kinase domain. ATP is bound by residues 30–38 (VGSGAYGSV) and K53. A nilotinib-binding site is contributed by E71. D168 serves as the catalytic Proton acceptor. T180 carries the phosphothreonine; by MAP2K3, MAP2K4 and MAP2K6 modification. Positions 180-182 (TGY) match the TXY motif. A Phosphotyrosine; by MAP2K3, MAP2K4 and MAP2K6 modification is found at Y182. Residues 312 to 331 (HDPDDEPEAEPYDESVEAKE) form a disordered region. The span at 314–326 (PDDEPEAEPYDES) shows a compositional bias: acidic residues. Position 323 is a phosphotyrosine; by ZAP70 (Y323).

The protein belongs to the protein kinase superfamily. CMGC Ser/Thr protein kinase family. MAP kinase subfamily. In terms of assembly, interacts with HDAC3 and DUSP16. The cofactor is Mg(2+). Post-translationally, dually phosphorylated on Thr-180 and Tyr-182 by MAP2K3/MKK3, MAP2K4/MKK4 and MAP2K6/MKK6, which activates the enzyme.

It localises to the cytoplasm. The protein localises to the nucleus. The catalysed reaction is L-seryl-[protein] + ATP = O-phospho-L-seryl-[protein] + ADP + H(+). The enzyme catalyses L-threonyl-[protein] + ATP = O-phospho-L-threonyl-[protein] + ADP + H(+). Activated by phosphorylation on threonine and tyrosine by MAP2K3/MKK3, MAP2K4/MKK4 and MAP2K6/MKK6. MAP2K3/MKK3 and MAP2K6/MKK6 are both essential for the activation of MAPK11 induced by environmental stress. HDAC3 interacts directly and selectively with MAPK11 to repress ATF2 transcriptional activity, and regulate TNF gene expression in LPS-stimulated cells. Inhibited by SB203580 and pyridinyl-imidazole related compounds. Its function is as follows. Serine/threonine kinase which acts as an essential component of the MAP kinase signal transduction pathway. MAPK11 is one of the four p38 MAPKs which play an important role in the cascades of cellular responses evoked by extracellular stimuli such as pro-inflammatory cytokines or physical stress leading to direct activation of transcription factors. Accordingly, p38 MAPKs phosphorylate a broad range of proteins and it has been estimated that they may have approximately 200 to 300 substrates each. MAPK11 functions are mostly redundant with those of MAPK14. Some of the targets are downstream kinases which are activated through phosphorylation and further phosphorylate additional targets. RPS6KA5/MSK1 and RPS6KA4/MSK2 can directly phosphorylate and activate transcription factors such as CREB1, ATF1, the NF-kappa-B isoform RELA/NFKB3, STAT1 and STAT3, but can also phosphorylate histone H3 and the nucleosomal protein HMGN1. RPS6KA5/MSK1 and RPS6KA4/MSK2 play important roles in the rapid induction of immediate-early genes in response to stress or mitogenic stimuli, either by inducing chromatin remodeling or by recruiting the transcription machinery. On the other hand, two other kinase targets, MAPKAPK2/MK2 and MAPKAPK3/MK3, participate in the control of gene expression mostly at the post-transcriptional level, by phosphorylating ZFP36 (tristetraprolin) and ELAVL1, and by regulating EEF2K, which is important for the elongation of mRNA during translation. MKNK1/MNK1 and MKNK2/MNK2, two other kinases activated by p38 MAPKs, regulate protein synthesis by phosphorylating the initiation factor EIF4E2. In the cytoplasm, the p38 MAPK pathway is an important regulator of protein turnover. For example, CFLAR is an inhibitor of TNF-induced apoptosis whose proteasome-mediated degradation is regulated by p38 MAPK phosphorylation. Ectodomain shedding of transmembrane proteins is regulated by p38 MAPKs as well. In response to inflammatory stimuli, p38 MAPKs phosphorylate the membrane-associated metalloprotease ADAM17. Such phosphorylation is required for ADAM17-mediated ectodomain shedding of TGF-alpha family ligands, which results in the activation of EGFR signaling and cell proliferation. Additional examples of p38 MAPK substrates are the FGFR1. FGFR1 can be translocated from the extracellular space into the cytosol and nucleus of target cells, and regulates processes such as rRNA synthesis and cell growth. FGFR1 translocation requires p38 MAPK activation. In the nucleus, many transcription factors are phosphorylated and activated by p38 MAPKs in response to different stimuli. Classical examples include ATF1, ATF2, ATF6, ELK1, PTPRH, DDIT3, TP53/p53 and MEF2C and MEF2A. The p38 MAPKs are emerging as important modulators of gene expression by regulating chromatin modifiers and remodelers. The promoters of several genes involved in the inflammatory response, such as IL6, IL8 and IL12B, display a p38 MAPK-dependent enrichment of histone H3 phosphorylation on 'Ser-10' (H3S10ph) in LPS-stimulated myeloid cells. This phosphorylation enhances the accessibility of the cryptic NF-kappa-B-binding sites marking promoters for increased NF-kappa-B recruitment. Phosphorylates methyltransferase DOT1L on 'Ser-834', 'Thr-900', 'Ser-902', 'Thr-984', 'Ser-1001', 'Ser-1009' and 'Ser-1104'. The protein is Mitogen-activated protein kinase 11 (Mapk11) of Mus musculus (Mouse).